Consider the following 250-residue polypeptide: 3-deoxy-manno-octulosonate cytidylyltransferase (250 aa).

The protein belongs to the KdsB family.

The protein resides in the cytoplasm. It catalyses the reaction 3-deoxy-alpha-D-manno-oct-2-ulosonate + CTP = CMP-3-deoxy-beta-D-manno-octulosonate + diphosphate. It participates in nucleotide-sugar biosynthesis; CMP-3-deoxy-D-manno-octulosonate biosynthesis; CMP-3-deoxy-D-manno-octulosonate from 3-deoxy-D-manno-octulosonate and CTP: step 1/1. It functions in the pathway bacterial outer membrane biogenesis; lipopolysaccharide biosynthesis. Activates KDO (a required 8-carbon sugar) for incorporation into bacterial lipopolysaccharide in Gram-negative bacteria. This is 3-deoxy-manno-octulosonate cytidylyltransferase from Sinorhizobium medicae (strain WSM419) (Ensifer medicae).